The primary structure comprises 21 residues: Tertiapin (21 aa).

2 cysteine pairs are disulfide-bonded: cysteine 3–cysteine 14 and cysteine 5–cysteine 18.

Post-translationally, oxidation of Met-13 results in the loss of biological activity. An amidation at Lys-21 is suggested in Ref.1. In terms of tissue distribution, expressed by the venom gland.

The protein resides in the secreted. Presynaptic neurotoxin that blocks the inwardly rectifying Kir1.1/KCNJ1 and Kir3.1/3.4 (KCNJ3/KCNJ5) potassium channels with high affinity by binding to the M1-M2 linker region of these channels in a 1:1 stoichiometry. It may block the potassium channel pore by occluding its alpha helix into the channel vestibule. Tertiapin-Q also inhibits calcium-activated large conductance BK-type (KCNMA) potassium channels in a concentration-, and voltage-dependent manner, in addition to inhibiting Kir3.1/3.2 (KCNJ3/KCNJ6) heteromultimers potassium channels. It can prevent dose-dependently acetylcholine(ACh)-induced atrioventricular blocks in mammalian hearts, as KCNJ3/KCNJ5 channels (also named I(KACh), because these channels are activated by ACh) are found in mammalian myocytes. Interacts specifically with calmodulin in the presence of calcium. This chain is Tertiapin, found in Apis mellifera (Honeybee).